The following is a 449-amino-acid chain: 23S rRNA (uracil(1939)-C(5))-methyltransferase RlmD (449 aa).

The TRAM domain maps to 1–66; sequence MGRSRHHNKL…AKFDEAKVVE (66 aa). [4Fe-4S] cluster is bound by residues C79, C85, C88, and C169. S-adenosyl-L-methionine-binding residues include Q280, F309, N314, E330, N357, and D379. The active-site Nucleophile is the C405.

It belongs to the class I-like SAM-binding methyltransferase superfamily. RNA M5U methyltransferase family. RlmD subfamily.

The enzyme catalyses uridine(1939) in 23S rRNA + S-adenosyl-L-methionine = 5-methyluridine(1939) in 23S rRNA + S-adenosyl-L-homocysteine + H(+). Functionally, catalyzes the formation of 5-methyl-uridine at position 1939 (m5U1939) in 23S rRNA. The protein is 23S rRNA (uracil(1939)-C(5))-methyltransferase RlmD of Francisella tularensis subsp. tularensis (strain FSC 198).